A 20-amino-acid polypeptide reads, in one-letter code: Cytosol aminopeptidase (20 aa).

Serine 6 is modified (phosphoserine).

This sequence belongs to the peptidase M17 family. As to quaternary structure, homohexamer. It depends on Zn(2+) as a cofactor. Mn(2+) serves as cofactor.

The protein resides in the cytoplasm. The enzyme catalyses Release of an N-terminal amino acid, Xaa-|-Yaa-, in which Xaa is preferably Leu, but may be other amino acids including Pro although not Arg or Lys, and Yaa may be Pro. Amino acid amides and methyl esters are also readily hydrolyzed, but rates on arylamides are exceedingly low.. It catalyses the reaction an S-substituted L-cysteinylglycine + H2O = an S-substituted L-cysteine + glycine. The catalysed reaction is L-cysteinylglycine + H2O = L-cysteine + glycine. It carries out the reaction S-benzyl-L-cysteinylglycine + H2O = S-benzyl-L-cysteine + glycine. The enzyme catalyses Release of N-terminal proline from a peptide.. Cytosolic metallopeptidase that catalyzes the removal of unsubstituted N-terminal hydrophobic amino acids from various peptides. The presence of Zn(2+) ions is essential for the peptidase activity, and the association with other cofactors can modulate the substrate spectificity of the enzyme. For instance, in the presence of Mn(2+), it displays a specific Cys-Gly hydrolyzing activity of Cys-Gly-S-conjugates. Involved in the metabolism of glutathione and in the degradation of glutathione S-conjugates, which may play a role in the control of the cell redox status. The protein is Cytosol aminopeptidase of Mesocricetus auratus (Golden hamster).